Here is a 481-residue protein sequence, read N- to C-terminus: Zinc metalloproteinase/disintegrin (481 aa).

Residues 1-20 (MIQVLLVTICLAVFPYQGSS) form the signal peptide. The propeptide occupies 21–190 (IILESGNVDD…KASQLYLTPE (170 aa)). Residues 197–392 (RHIELAIVVD…KKPQCILNAP (196 aa)) enclose the Peptidase M12B domain. Residues Glu200 and Asp284 each contribute to the Ca(2+) site. 3 cysteine pairs are disulfide-bonded: Cys308–Cys387, Cys349–Cys371, and Cys351–Cys354. A Zn(2+)-binding site is contributed by His333. Residue Glu334 is part of the active site. Residues His337 and His343 each contribute to the Zn(2+) site. Residues Cys387 and Asn390 each coordinate Ca(2+). Positions 393 to 410 (LRTDTVSTPISGNEFLEA) are excised as a propeptide. The region spanning 400–481 (TPISGNEFLE…ADCPRNGLYG (82 aa)) is the Disintegrin domain. 6 cysteine pairs are disulfide-bonded: Cys414-Cys429, Cys416-Cys424, Cys423-Cys446, Cys437-Cys443, Cys442-Cys467, and Cys455-Cys474. The Cell attachment site motif lies at 459 to 461 (RGD).

Belongs to the venom metalloproteinase (M12B) family. P-II subfamily. P-IIa sub-subfamily. In terms of assembly, monomer. Requires Zn(2+) as cofactor. Expressed by the venom gland.

The protein localises to the secreted. Its function is as follows. Impairs hemostasis in the envenomed animal. Functionally, inhibits platelet aggregation induced by ADP and collagen. Acts by inhibiting fibrinogen interaction with platelet receptors GPIIb/GPIIIa (ITGA2B/ITGB3). Has antitumor-growth activity. This is Zinc metalloproteinase/disintegrin from Protobothrops jerdonii (Jerdon's pitviper).